Consider the following 425-residue polypeptide: RNA polymerase sigma factor SigA (425 aa).

A sigma-70 factor domain-2 region spans residues 193-263 (MVQSNLRLVV…TRAIADQSRT (71 aa)). Positions 217-220 (DLIQ) match the Interaction with polymerase core subunit RpoC motif. The sigma-70 factor domain-3 stretch occupies residues 272-347 (ETISRIKKTT…EADGETPEDE (76 aa)). Residues 360-413 (VLDTLSPRERDVLRLRYGLDDGRMKTLEEIGQIFNVTRERIRQIEAKALRKLRH) are sigma-70 factor domain-4. Positions 386–405 (LEEIGQIFNVTRERIRQIEA) form a DNA-binding region, H-T-H motif.

This sequence belongs to the sigma-70 factor family. RpoD/SigA subfamily. Interacts transiently with the RNA polymerase catalytic core.

It localises to the cytoplasm. In terms of biological role, sigma factors are initiation factors that promote the attachment of RNA polymerase to specific initiation sites and are then released. This sigma factor is the primary sigma factor during exponential growth. This chain is RNA polymerase sigma factor SigA, found in Synechocystis sp. (strain ATCC 27184 / PCC 6803 / Kazusa).